Consider the following 349-residue polypeptide: Peptide transport system ATP-binding protein SapD (349 aa).

Residues 1–259 (MALLDICNLN…PHHPYTQALI (259 aa)) form the ABC transporter domain. 40-47 (GESGSGKS) contacts ATP.

Belongs to the ABC transporter superfamily.

Its subcellular location is the cell inner membrane. Its function is as follows. Involved in a peptide intake transport system that plays a role in the resistance to antimicrobial peptides. In Haemophilus influenzae (strain ATCC 51907 / DSM 11121 / KW20 / Rd), this protein is Peptide transport system ATP-binding protein SapD (sapD).